A 158-amino-acid chain; its full sequence is UPF0260 protein RL1394 (158 aa).

The protein belongs to the UPF0260 family.

This chain is UPF0260 protein RL1394, found in Rhizobium johnstonii (strain DSM 114642 / LMG 32736 / 3841) (Rhizobium leguminosarum bv. viciae).